Here is a 235-residue protein sequence, read N- to C-terminus: Heme oxygenase (235 aa).

Histidine 19 serves as a coordination point for heme b.

The protein belongs to the heme oxygenase family.

Its subcellular location is the plastid. The protein localises to the chloroplast. The enzyme catalyses heme b + 3 reduced [NADPH--hemoprotein reductase] + 3 O2 = biliverdin IXalpha + CO + Fe(2+) + 3 oxidized [NADPH--hemoprotein reductase] + 3 H2O + H(+). Catalyzes the opening of the heme ring with the release of iron. Key enzyme in the synthesis of the chromophoric part of the photosynthetic antennae. In Rhodella violacea (Red alga), this protein is Heme oxygenase (pbsA).